A 175-amino-acid chain; its full sequence is FMN reductase (NADH) RutF (175 aa).

It belongs to the non-flavoprotein flavin reductase family. RutF subfamily.

It catalyses the reaction FMNH2 + NAD(+) = FMN + NADH + 2 H(+). In terms of biological role, catalyzes the reduction of FMN to FMNH2 which is used to reduce pyrimidine by RutA via the Rut pathway. This Serratia proteamaculans (strain 568) protein is FMN reductase (NADH) RutF.